We begin with the raw amino-acid sequence, 635 residues long: ATP-dependent zinc metalloprotease FtsH (635 aa).

The Cytoplasmic segment spans residues methionine 1–arginine 6. A helical membrane pass occupies residues serine 7–serine 27. Residues aspartate 28 to threonine 103 are Periplasmic-facing. A helical membrane pass occupies residues phenylalanine 104–phenylalanine 124. At methionine 125–isoleucine 635 the chain is on the cytoplasmic side. Glycine 195–threonine 202 serves as a coordination point for ATP. Zn(2+) is bound at residue histidine 417. Residue glutamate 418 is part of the active site. Zn(2+) is bound by residues histidine 421 and aspartate 495. Residues serine 600–isoleucine 635 form a disordered region. The span at lysine 615 to isoleucine 635 shows a compositional bias: basic and acidic residues.

In the central section; belongs to the AAA ATPase family. It in the C-terminal section; belongs to the peptidase M41 family. As to quaternary structure, homohexamer. It depends on Zn(2+) as a cofactor.

It localises to the cell inner membrane. Functionally, acts as a processive, ATP-dependent zinc metallopeptidase for both cytoplasmic and membrane proteins. Plays a role in the quality control of integral membrane proteins. The sequence is that of ATP-dependent zinc metalloprotease FtsH from Rickettsia felis (strain ATCC VR-1525 / URRWXCal2) (Rickettsia azadi).